The primary structure comprises 71 residues: UPF0435 protein SE_1565 (71 aa).

Belongs to the UPF0435 family.

In Staphylococcus epidermidis (strain ATCC 12228 / FDA PCI 1200), this protein is UPF0435 protein SE_1565.